The sequence spans 1558 residues: ABC transporter NFT1 (1558 aa).

Residues 1 to 29 lie on the Extracellular side of the membrane; sequence MIKNGTCPYWERDDLSECARREYIEFKFP. Asn4 carries N-linked (GlcNAc...) asparagine glycosylation. The chain crosses the membrane as a helical span at residues 30-50; that stretch reads LFILLTGMIYAFCKVFRAFYL. The Cytoplasmic segment spans residues 51-103; the sequence is RGKNHTNEAPEFEEQGNGNHEYARFSVLRLKSAWESRSFCNVNNRSTFDKFKK. A helical membrane pass occupies residues 104–124; the sequence is FIEGAFIVLQLTIHLYILSSM. The Extracellular portion of the chain corresponds to 125–130; that stretch reads PMDNKK. A helical transmembrane segment spans residues 131–151; it reads FFHQGFLVQMFLWILLLVVIT. At 152-169 the chain is on the cytoplasmic side; that stretch reads LRLISASQSFRWVLACKR. A helical transmembrane segment spans residues 170-190; that stretch reads DLWAVSFYSYASLFTLSILPL. The Extracellular segment spans residues 191–201; the sequence is RSVFIGKIKDK. A helical membrane pass occupies residues 202–222; the sequence is IMVKYIISETFIDLALLLLLS. Residues 223–302 are Cytoplasmic-facing; the sequence is TSSIEGTRYS…SSKKGRLLPN (80 aa). A helical transmembrane segment spans residues 303 to 323; it reads IICYFKAVFISQLFLAFVSSF. The ABC transmembrane type-1 1 domain occupies 311-621; that stretch reads FISQLFLAFV…IASTVSLLIQ (311 aa). The Extracellular segment spans residues 324–351; it reads LNFVPSLLMPRILSYVNDPKSKSWNLVS. The helical transmembrane segment at 352-374 threads the bilayer; it reads LYVSSMLVSKIIATTCRGQGLFL. Over 375–449 the chain is Cytoplasmic; it reads GEKGTMQLRT…VMSIDAFKVS (75 aa). The disordered stretch occupies residues 410–434; sequence NASTSFEENPDSSEAEPRKKSSRKD. The segment covering 424–434 has biased composition (basic and acidic residues); that stretch reads AEPRKKSSRKD. Residues 450–470 traverse the membrane as a helical segment; that stretch reads EAMNTFYLACEAVFMTVTALM. The Extracellular portion of the chain corresponds to 471–481; sequence ILYSLLGWSAF. The helical transmembrane segment at 482 to 504 threads the bilayer; sequence AGTFALLAMIPLNFWCATFYGNY. Over 505–558 the chain is Cytoplasmic; it reads QADQLILTDKRTSGISEALNSIRVIKLLAWENLFYQKIINVRDGEIRLLKKKAT. A helical transmembrane segment spans residues 559-579; the sequence is IFFLNHLIWFFGPTLVSAITF. At 580-584 the chain is on the extracellular side; that stretch reads SVFIK. The chain crosses the membrane as a helical span at residues 585 to 605; that stretch reads FQNQTLTPTIAFTALSLFAIL. Residues 606-953 are Cytoplasmic-facing; the sequence is RTPMDQIAST…KFSAYKWLAD (348 aa). The ABC transporter 1 domain maps to 651–892; sequence FGFEDASMEW…NEFLRESINN (242 aa). 686 to 693 lines the ATP pocket; it reads GPTGSGKS. The segment covering 892-901 has biased composition (polar residues); that stretch reads NDSKNTTHNQ. The segment at 892-926 is disordered; the sequence is NDSKNTTHNQIDLKRSTTSKKTKNGDPEGGNSQDE. Residues 954–974 traverse the membrane as a helical segment; sequence YFGGLGVVFVFTSSSILIHGI. The ABC transmembrane type-1 2 domain maps to 961-1251; the sequence is VFVFTSSSIL…IIKVFSSVEL (291 aa). Over 975-1013 the chain is Extracellular; sequence TLSQGFWLRYWLDTGSSGSKSTWLYRIVEGHSNIYFLLT. A helical transmembrane segment spans residues 1014-1034; sequence YIIIGLVSSFLTSGKVWIAII. Topologically, residues 1035–1082 are cytoplasmic; sequence SGTNVTKKIFAKLLSSILYAKLRFHNVTPTGRIMNRFSKDMDIIDQQL. Residues 1083–1105 form a helical membrane-spanning segment; that stretch reads IPNFEGLSYSVVVCLWIILLIGY. Topologically, residues 1106 to 1109 are extracellular; it reads VTPQ. A helical membrane pass occupies residues 1110–1132; that stretch reads FLLFAIPLCALYYTVCTLYLRAS. Residues 1133–1199 are Cytoplasmic-facing; the sequence is RELKRIDNIN…ATEWITYRVD (67 aa). Residues 1200 to 1220 form a helical membrane-spanning segment; that stretch reads IIGTLVLFSSSVMIIMKASYL. At 1221–1222 the chain is on the extracellular side; the sequence is DA. A helical membrane pass occupies residues 1223-1243; the sequence is GLAGILLSNAFSFTETAQWII. Residues 1244 to 1558 are Cytoplasmic-facing; it reads KVFSSVELLM…LAKVSFDNKR (315 aa). The 254-residue stretch at 1285-1538 folds into the ABC transporter 2 domain; it reads VELKNLSLRY…RNTIFYRLCR (254 aa). Residue 1319-1326 coordinates ATP; sequence GRTGAGKS.

It belongs to the ABC transporter superfamily. ABCC family. Conjugate transporter (TC 3.A.1.208) subfamily.

Its subcellular location is the membrane. The sequence is that of ABC transporter NFT1 (NFT1) from Saccharomyces cerevisiae (Baker's yeast).